A 289-amino-acid polypeptide reads, in one-letter code: Metal-staphylopine import system permease protein CntC (289 aa).

The next 5 helical transmembrane spans lie at 13–33 (AVIALGIIVLYVFLGLAAPLV), 77–97 (LLYVFVALFVSVLIGSILGFL), 115–135 (VMLAFPSYVVTLALIALFGMG), 194–214 (IAIISSSSMCSMILQISGFSF), and 249–269 (IAIVIIVMAFNFLSDALQIAI). The region spanning 73-262 (IRPSLLYVFV…IIVMAFNFLS (190 aa)) is the ABC transmembrane type-1 domain.

Belongs to the binding-protein-dependent transport system permease family. The complex is composed of two ATP-binding proteins (CntD and CntF), two transmembrane proteins (CntB and CntC) and a solute-binding protein (CntA).

It is found in the cell membrane. Functionally, part of the ABC transporter complex CntABCDF (Opp1) involved in the uptake of metal in complex with the metallophore staphylopine (StP). May be involved in the import of a large array of divalent metals ions such as nickel, cobalt, zinc, copper and iron. Probably responsible for the translocation of the substrate across the membrane. In Staphylococcus aureus (strain Mu50 / ATCC 700699), this protein is Metal-staphylopine import system permease protein CntC.